A 269-amino-acid chain; its full sequence is Formamidopyrimidine-DNA glycosylase (269 aa).

Pro-2 functions as the Schiff-base intermediate with DNA in the catalytic mechanism. The active-site Proton donor is Glu-3. Residue Lys-57 is the Proton donor; for beta-elimination activity of the active site. DNA-binding residues include His-90, Arg-109, and Lys-150. The FPG-type zinc finger occupies 235–269 (QVYGRAGEPCRACGTPIESAKHGQRSTFFCPRCQR). Residue Arg-259 is the Proton donor; for delta-elimination activity of the active site.

The protein belongs to the FPG family. In terms of assembly, monomer. It depends on Zn(2+) as a cofactor.

The enzyme catalyses Hydrolysis of DNA containing ring-opened 7-methylguanine residues, releasing 2,6-diamino-4-hydroxy-5-(N-methyl)formamidopyrimidine.. It carries out the reaction 2'-deoxyribonucleotide-(2'-deoxyribose 5'-phosphate)-2'-deoxyribonucleotide-DNA = a 3'-end 2'-deoxyribonucleotide-(2,3-dehydro-2,3-deoxyribose 5'-phosphate)-DNA + a 5'-end 5'-phospho-2'-deoxyribonucleoside-DNA + H(+). Its function is as follows. Involved in base excision repair of DNA damaged by oxidation or by mutagenic agents. Acts as a DNA glycosylase that recognizes and removes damaged bases. Has a preference for oxidized purines, such as 7,8-dihydro-8-oxoguanine (8-oxoG). Has AP (apurinic/apyrimidinic) lyase activity and introduces nicks in the DNA strand. Cleaves the DNA backbone by beta-delta elimination to generate a single-strand break at the site of the removed base with both 3'- and 5'-phosphates. This chain is Formamidopyrimidine-DNA glycosylase, found in Serratia proteamaculans (strain 568).